We begin with the raw amino-acid sequence, 178 residues long: ATP synthase subunit delta (178 aa).

It belongs to the ATPase delta chain family. In terms of assembly, F-type ATPases have 2 components, F(1) - the catalytic core - and F(0) - the membrane proton channel. F(1) has five subunits: alpha(3), beta(3), gamma(1), delta(1), epsilon(1). F(0) has three main subunits: a(1), b(2) and c(10-14). The alpha and beta chains form an alternating ring which encloses part of the gamma chain. F(1) is attached to F(0) by a central stalk formed by the gamma and epsilon chains, while a peripheral stalk is formed by the delta and b chains.

It is found in the cell inner membrane. In terms of biological role, f(1)F(0) ATP synthase produces ATP from ADP in the presence of a proton or sodium gradient. F-type ATPases consist of two structural domains, F(1) containing the extramembraneous catalytic core and F(0) containing the membrane proton channel, linked together by a central stalk and a peripheral stalk. During catalysis, ATP synthesis in the catalytic domain of F(1) is coupled via a rotary mechanism of the central stalk subunits to proton translocation. Functionally, this protein is part of the stalk that links CF(0) to CF(1). It either transmits conformational changes from CF(0) to CF(1) or is implicated in proton conduction. This is ATP synthase subunit delta from Thioalkalivibrio sulfidiphilus (strain HL-EbGR7).